The chain runs to 212 residues: Peroxisomal membrane protein 4 (212 aa).

The next 2 membrane-spanning stretches (helical) occupy residues 97 to 117 (GKTY…LVFG) and 153 to 173 (LDPF…LFEY). Asn-206 carries N-linked (GlcNAc...) asparagine glycosylation.

Belongs to the peroxisomal membrane protein PXMP2/4 family. As to quaternary structure, interacts with PEX19.

It localises to the peroxisome membrane. The polypeptide is Peroxisomal membrane protein 4 (PXMP4) (Bos taurus (Bovine)).